Consider the following 94-residue polypeptide: MARVTVEDAVNQIGNRFDMILVAARRARQIAVQGKDPMVEEENDKPTVIALREIELGLVTADTLDADERQTVREREAAEIAAVAAIAEGRNDIL.

Belongs to the RNA polymerase subunit omega family. In terms of assembly, consists of a sigma factor and the RNAP core enzyme which is composed of 2 alpha chains, 1 beta chain, 1 beta' chain and 1 subunit omega.

It carries out the reaction RNA(n) + a ribonucleoside 5'-triphosphate = RNA(n+1) + diphosphate. Functionally, promotes RNA polymerase assembly. Latches the N- and C-terminal regions of the beta' subunit thereby facilitating its interaction with the beta and alpha subunits. The polypeptide is DNA-directed RNA polymerase subunit omega (Shewanella violacea (strain JCM 10179 / CIP 106290 / LMG 19151 / DSS12)).